We begin with the raw amino-acid sequence, 384 residues long: L-cysteine:1D-myo-inositol 2-amino-2-deoxy-alpha-D-glucopyranoside ligase (384 aa).

Cys16 lines the Zn(2+) pocket. Residues 16-19 (CGIT), Thr31, and 54-56 (NVT) each bind L-cysteinyl-5'-AMP. Residues 18–28 (ITPYDATHLGH) carry the 'HIGH' region motif. Residues 159–164 (ERGGDP) carry the 'ERGGDP' region motif. Trp199 contributes to the L-cysteinyl-5'-AMP binding site. Cys203 serves as a coordination point for Zn(2+). Position 221–223 (221–223 (GSD)) interacts with L-cysteinyl-5'-AMP. His228 lines the Zn(2+) pocket. Position 255 (Ile255) interacts with L-cysteinyl-5'-AMP. The 'KMSKS' region signature appears at 261–265 (KMSKS).

The protein belongs to the class-I aminoacyl-tRNA synthetase family. MshC subfamily. In terms of assembly, monomer. The cofactor is Zn(2+).

The catalysed reaction is 1D-myo-inositol 2-amino-2-deoxy-alpha-D-glucopyranoside + L-cysteine + ATP = 1D-myo-inositol 2-(L-cysteinylamino)-2-deoxy-alpha-D-glucopyranoside + AMP + diphosphate + H(+). Its function is as follows. Catalyzes the ATP-dependent condensation of GlcN-Ins and L-cysteine to form L-Cys-GlcN-Ins. In Mycobacterium avium (strain 104), this protein is L-cysteine:1D-myo-inositol 2-amino-2-deoxy-alpha-D-glucopyranoside ligase.